We begin with the raw amino-acid sequence, 30 residues long: Snaclec carinactivase-1 regulatory subunit 14 kDa chain (30 aa).

The region spanning 1–30 is the C-type lectin domain; that stretch reads DCLPDWFHYEGHCYRVFDEPKKWADAEKFC. Residues C2 and C13 are joined by a disulfide bond.

This sequence belongs to the snaclec family. Heterodimer of a metalloproteinase subunit and a regulatory subunit comprising two polypeptides disulfide-linked (14 kDa and 17 kDa chains). Expressed by the venom gland.

It localises to the secreted. Functionally, calcium-dependent prothrombin activator. This protein may activate prothrombin via recognition by the regulatory subunit of the calcium ion bound conformation of its gamma-carboxyglutamic acid (GLA) domain, and the subsequent conversion of prothrombin to active thrombin is catalyzed by the catalytic subunit. This is Snaclec carinactivase-1 regulatory subunit 14 kDa chain from Echis carinatus (Saw-scaled viper).